The primary structure comprises 510 residues: MICRSLLLLRSNAASKASNIVKHVAATGCLPKYSSEAPARYFSSEPSLQVDSTEENGFKGHGMLAPFTAGWQSTDLHPLVIDRSEGSYVYDINGKKYIDALAGLWSTALGGNEPRLIKAATDQLNKLPFYHSFWNRTTKPSLDLANEILSMFTAREMGKIFFTNSGSEANDSQVKLVWYYNNALGRPNKKKFIARSKSYHGSTLVSASLSGLPALHQKFDLPAPFVLHTDCPHYWRFHLPDETEEEFATRLATNLENLILKEGPETIAAFIAEPVMGAGGVIPPPKTYFEKIQAVLKKYDILLIADEVITAFGRLGTMFGCDMYDIKPDLVSIAKALSSAYMPIGAILVSPEITDVIYSQSNKLGSFAHGFTYSGHPVSCAVAIEALKIYKERNIIEHVQKIAPRFQEGIKAFSGSPIVGEIRGLGLILGTEFVDNKSPNDPFPAEWGVGSLFGAECEKRGMLIRVAGDNIMLSPPLIMTPDEVEEIICKYGDALKATEERIAELKAKRG.

The transit peptide at 1–41 (MICRSLLLLRSNAASKASNIVKHVAATGCLPKYSSEAPARY) directs the protein to the mitochondrion. A pyridoxal 5'-phosphate-binding site is contributed by 166-167 (GS). Substrate is bound at residue Y199. D306 serves as a coordination point for pyridoxal 5'-phosphate. K335 is a substrate binding site. Position 335 is an N6-(pyridoxal phosphate)lysine (K335).

The protein belongs to the class-III pyridoxal-phosphate-dependent aminotransferase family.

Its subcellular location is the mitochondrion. The enzyme catalyses 4-aminobutanoate + pyruvate = succinate semialdehyde + L-alanine. The catalysed reaction is 4-aminobutanoate + glyoxylate = succinate semialdehyde + glycine. Transaminase that degrades gamma-amino butyric acid (GABA). This chain is Probable gamma-aminobutyrate transaminase 3, mitochondrial, found in Oryza sativa subsp. japonica (Rice).